The chain runs to 547 residues: Smu-2 suppressor of mec-8 and unc-52 protein (547 aa).

Disordered regions lie at residues 18 to 125 (TSAR…AQDQ), 164 to 202 (IDKSDDDDDDDIDTAFDEKVTSSSSSSKPSEASLLAQEL), 288 to 459 (AEPK…AGPK), 496 to 515 (NGEGGRKNKKQSAVSDAKRL), and 524 to 547 (KIMDKRKAGGDGAGGGGDYKKPKY). Over residues 34–44 (ADPKTGDDKPA) the composition is skewed to basic and acidic residues. Positions 45–58 (SFKHKHLKPAKFKK) are enriched in basic residues. The stretch at 66-94 (KAKKEKTEADEDEAALKNILKNYRDRAAE) forms a coiled coil. Over residues 87–106 (NYRDRAAERRKQGDEKEDPS) the composition is skewed to basic and acidic residues. The interval 163-223 (EIDKSDDDDD…SLHRVLFKNE (61 aa)) is required and sufficient for interaction with smu-1. Acidic residues predominate over residues 166–178 (KSDDDDDDDIDTA). 2 stretches are compositionally biased toward low complexity: residues 185–196 (SSSSSSKPSEAS) and 307–317 (APGAAAAAPGA). Basic and acidic residues predominate over residues 330 to 423 (VPSRKSRDSR…EREKKRKELE (94 aa)). A run of 12 repeats spans residues 336–337 (RD), 339–340 (RD), 348–349 (RD), 350–351 (RS), 352–353 (RD), 354–355 (RS), 356–357 (RD), 358–359 (RD), 360–361 (RD), 362–363 (RD), 364–365 (RD), and 367–368 (RD). Residues 336–368 (RDSRDAGRRGSRRDRSRDRSRDRDRDRDRDNRD) form a 12 X 2 AA repeats of R-[DS] region. A coiled-coil region spans residues 371 to 427 (FEKSANSRREEEQNRREQQRERERAEQERRREREKEREQEKAKEREKKRKELEESSG).

Belongs to the RED family. In terms of assembly, probable component of the spliceosome. Heterotetramer with smu-1. The smu-1 homodimer interacts (via the N-terminal region including the LisH and CTLH domains) with smu-2, giving rise to a heterotetramer. In terms of tissue distribution, ubiquitous.

It is found in the nucleus. Functionally, auxiliary spliceosomal protein that regulates selection of alternative splice sites in a small set of target pre-mRNA species. Selectively regulates alternative splicing of unc-52 exon 17. Thus, smu-2 mutants selectively suppress the effects of unc-52 nonsense mutations in exon 17 by promoting the accumulation of unc-52 isoforms that lack exon 17. In contrast, smu-2 mutants do not suppress the effects of an unc-52 mutation that affects the 5' splice site of exon 16. Required for normal accumulation of smu-1. The polypeptide is Smu-2 suppressor of mec-8 and unc-52 protein (Caenorhabditis elegans).